Consider the following 156-residue polypeptide: D-aminoacyl-tRNA deacylase (156 aa).

Positions 137 to 138 (GP) match the Gly-cisPro motif, important for rejection of L-amino acids motif.

The protein belongs to the DTD family. In terms of assembly, homodimer.

The protein localises to the cytoplasm. It catalyses the reaction glycyl-tRNA(Ala) + H2O = tRNA(Ala) + glycine + H(+). The enzyme catalyses a D-aminoacyl-tRNA + H2O = a tRNA + a D-alpha-amino acid + H(+). An aminoacyl-tRNA editing enzyme that deacylates mischarged D-aminoacyl-tRNAs. Also deacylates mischarged glycyl-tRNA(Ala), protecting cells against glycine mischarging by AlaRS. Acts via tRNA-based rather than protein-based catalysis; rejects L-amino acids rather than detecting D-amino acids in the active site. By recycling D-aminoacyl-tRNA to D-amino acids and free tRNA molecules, this enzyme counteracts the toxicity associated with the formation of D-aminoacyl-tRNA entities in vivo and helps enforce protein L-homochirality. This is D-aminoacyl-tRNA deacylase from Dictyoglomus turgidum (strain DSM 6724 / Z-1310).